The primary structure comprises 798 residues: Phenylalanine--tRNA ligase beta subunit (798 aa).

A tRNA-binding domain is found at glycine 39–arginine 148. One can recognise a B5 domain in the interval proline 401–alanine 477. Residues aspartate 455, aspartate 461, glutamate 464, and glutamate 465 each contribute to the Mg(2+) site. In terms of domain architecture, FDX-ACB spans serine 705–arginine 797.

This sequence belongs to the phenylalanyl-tRNA synthetase beta subunit family. Type 1 subfamily. Tetramer of two alpha and two beta subunits. Mg(2+) is required as a cofactor.

The protein localises to the cytoplasm. It carries out the reaction tRNA(Phe) + L-phenylalanine + ATP = L-phenylalanyl-tRNA(Phe) + AMP + diphosphate + H(+). The protein is Phenylalanine--tRNA ligase beta subunit of Fusobacterium nucleatum subsp. nucleatum (strain ATCC 25586 / DSM 15643 / BCRC 10681 / CIP 101130 / JCM 8532 / KCTC 2640 / LMG 13131 / VPI 4355).